Consider the following 152-residue polypeptide: Snaclec agkisacutacin subunit A (152 aa).

Residues 1 to 23 form the signal peptide; that stretch reads MGRFIFVSFGLLVVFLSLSGTAA. The 129-residue stretch at 24 to 152 folds into the C-type lectin domain; the sequence is DCSSGWSSYE…EQQDPFVCEA (129 aa). Disulfide bonds link Cys25-Cys36, Cys53-Cys150, and Cys125-Cys142. Ca(2+) contacts are provided by Ser64, Glu66, and Glu70. Ca(2+) is bound at residue Glu151.

It belongs to the snaclec family. As to quaternary structure, heterodimer with subunit B of AaACP or agkisacutacin; disulfide-linked. As to expression, expressed by the venom gland.

The protein resides in the secreted. Functionally, anticoagulant protein which binds to the gamma-carboxyglutamic acid-domain regions of factors IX (F9) and factor X (F10) in the presence of calcium with a 1 to 1 stoichiometry. Also inhibits platelet aggregation by binding to platelet glycoprotein Ibalpha (GP1BA) and functioning as a blocker of von Willebrand factor (VWF). Is devoid of hemorrhagic and lethal activities. Possesses antithrombotic and thrombolytic activities. Also hydrolyzes the Aalpha-chain of fibrinogen (FGA). Does not affect the Bbeta-chain (FGB) and the gamma chain (FGG). The chain is Snaclec agkisacutacin subunit A from Deinagkistrodon acutus (Hundred-pace snake).